Reading from the N-terminus, the 367-residue chain is NAD(P)H-quinone oxidoreductase subunit 1, chloroplastic (367 aa).

7 helical membrane passes run 30-50 (LFPI…IVWL), 98-118 (FSIG…VIPF), 127-147 (LSIG…GLLM), 164-184 (AAAQ…SISL), 273-293 (LFVT…IFVP), 304-324 (VFGT…FLFI), and 340-360 (LLNL…LLTT).

It belongs to the complex I subunit 1 family. NDH is composed of at least 16 different subunits, 5 of which are encoded in the nucleus.

It is found in the plastid. The protein resides in the chloroplast thylakoid membrane. The catalysed reaction is a plastoquinone + NADH + (n+1) H(+)(in) = a plastoquinol + NAD(+) + n H(+)(out). It catalyses the reaction a plastoquinone + NADPH + (n+1) H(+)(in) = a plastoquinol + NADP(+) + n H(+)(out). Its function is as follows. NDH shuttles electrons from NAD(P)H:plastoquinone, via FMN and iron-sulfur (Fe-S) centers, to quinones in the photosynthetic chain and possibly in a chloroplast respiratory chain. The immediate electron acceptor for the enzyme in this species is believed to be plastoquinone. Couples the redox reaction to proton translocation, and thus conserves the redox energy in a proton gradient. The chain is NAD(P)H-quinone oxidoreductase subunit 1, chloroplastic from Nicotiana tabacum (Common tobacco).